Here is a 62-residue protein sequence, read N- to C-terminus: E3 SUMO-protein ligase EGR2 (62 aa).

3 C2H2-type zinc fingers span residues 1 to 21, 27 to 49, and 55 to 62; these read AEGCDRRFSASDELTRHIRIH, FQCAICMRNFSRSDHLTTHIRTH, and FACDYCGR.

It belongs to the EGR C2H2-type zinc-finger protein family. In terms of assembly, interacts with HCFC1. Interacts with WWP2. Interacts with UBC9. Interacts with CITED1. Interacts (via phosphorylated form) with SFN. Post-translationally, ubiquitinated by WWP2 leading to proteasomal degradation. In terms of processing, acetylated. May be deacetylated by HDAC6, HDAC10 or SIRT1.

The protein localises to the nucleus. The protein operates within protein modification; protein sumoylation. Functionally, sequence-specific DNA-binding transcription factor. Plays a role in hindbrain segmentation by regulating the expression of a subset of homeobox containing genes and in Schwann cell myelination by regulating the expression of genes involved in the formation and maintenance of myelin. Binds to two EGR2-consensus sites EGR2A (5'-CTGTAGGAG-3') and EGR2B (5'-ATGTAGGTG-3') in the HOXB3 enhancer and promotes HOXB3 transcriptional activation. Binds to specific DNA sites located in the promoter region of HOXA4, HOXB2 and ERBB2. Regulates hindbrain segmentation by controlling the expression of Hox genes, such as HOXA4, HOXB3 and HOXB2, and thereby specifying odd and even rhombomeres. Promotes the expression of HOXB3 in the rhombomere r5 in the hindbrain. Regulates myelination in the peripheral nervous system after birth, possibly by regulating the expression of myelin proteins, such as MPZ, and by promoting the differentiation of Schwann cells. Involved in the development of the jaw openener musculature, probably by playing a role in its innervation through trigeminal motor neurons. May play a role in adipogenesis, possibly by regulating the expression of CEBPB. Its function is as follows. E3 SUMO-protein ligase helping SUMO1 conjugation to its coregulators NAB1 and NAB2, whose sumoylation down-regulates EGR2 transcriptional activity. This is E3 SUMO-protein ligase EGR2 (EGR2) from Cerdocyon thous (Crab-eating fox).